We begin with the raw amino-acid sequence, 346 residues long: CLOCK-interacting pacemaker (346 aa).

Residues 1–42 show a composition bias toward basic and acidic residues; the sequence is MEKNQKCATEQERFKARSGHGDGQRAEPRKTQTTTESDKDSG. Disordered regions lie at residues 1–83 and 167–228; these read MEKN…SQPQ and CARK…KELD. Positions 50–68 are enriched in polar residues; it reads CLSSVEQTDTEEGPTTSRW. The segment covering 179-192 has biased composition (basic residues); that stretch reads NQTKRQCSKGHSGS. Positions 205 to 222 are enriched in polar residues; it reads GVQQGPVDQNVKESSVSA. The stretch at 283–315 forms a coiled coil; sequence MKTKELARHNQATQSQLEKLQEQVQLYATAMSS.

It is found in the nucleus. Its subcellular location is the cytoplasm. The protein localises to the cytosol. Transcriptional repressor which acts as a negative-feedback regulator of CLOCK-BMAL1 transcriptional activity in the circadian-clock mechanism. The physiological relevance of these observations is unsure. This Xenopus laevis (African clawed frog) protein is CLOCK-interacting pacemaker (cipc).